The sequence spans 131 residues: Large ribosomal subunit protein bL17 (131 aa).

This sequence belongs to the bacterial ribosomal protein bL17 family. Part of the 50S ribosomal subunit. Contacts protein L32.

The chain is Large ribosomal subunit protein bL17 from Herminiimonas arsenicoxydans.